A 263-amino-acid chain; its full sequence is Transcription factor 19-like protein (263 aa).

An FHA domain is found at 31 to 88 (YGLGCRADLCDVALRPQQEPGLISGVHAELHAELQGDDWRVSLEDHSSQGTLVNNVRL). Position 78 is a phosphoserine (Ser-78). Disordered regions lie at residues 140–164 (SKGE…PLST) and 189–225 (LTFS…RKSA).

The protein resides in the nucleus. Its function is as follows. Potential transcription factor that may play a role in the regulation of genes involved in cell cycle G1/S transition. May bind to regulatory elements of genes, including the promoter of the transcription factor FOXO1. The protein is Transcription factor 19-like protein (Tcf19) of Mus musculus (Mouse).